Here is a 34-residue protein sequence, read N- to C-terminus: Cytochrome b6-f complex subunit 7 (34 aa).

A helical transmembrane segment spans residues 9-29 (ALLSFGLIFVGWALGALLLKI).

This sequence belongs to the PetM family. As to quaternary structure, the 4 large subunits of the cytochrome b6-f complex are cytochrome b6, subunit IV (17 kDa polypeptide, PetD), cytochrome f and the Rieske protein, while the 4 small subunits are PetG, PetL, PetM and PetN. The complex functions as a dimer.

The protein localises to the cellular thylakoid membrane. Its function is as follows. Component of the cytochrome b6-f complex, which mediates electron transfer between photosystem II (PSII) and photosystem I (PSI), cyclic electron flow around PSI, and state transitions. This Nostoc sp. (strain PCC 7120 / SAG 25.82 / UTEX 2576) protein is Cytochrome b6-f complex subunit 7.